The sequence spans 454 residues: Ig mu chain C region (454 aa).

Residues 1–105 are CH1; it reads SPSSPTVFPL…NKDLRVPIPV (105 aa). An intrachain disulfide couples cysteine 27 to cysteine 88. Residues asparagine 45, asparagine 112, asparagine 192, asparagine 210, asparagine 238, asparagine 257, and asparagine 280 are each glycosylated (N-linked (GlcNAc...) asparagine). The tract at residues 106–218 is CH2; it reads VTEMNPNVSV…KNVSSTCAAS (113 aa). The cysteines at positions 135 and 198 are disulfide-linked. The interval 219–324 is CH3; sequence PSTDIQAFPI…QKKFISKPRE (106 aa). Cystine bridges form between cysteine 245–cysteine 304 and cysteine 352–cysteine 414. Residues 325–454 are CH4; it reads MNKTPPAVYQ…IMSDAGGTCY (130 aa). Asparagine 441 is a glycosylation site (N-linked (GlcNAc...) asparagine).

This chain is Ig mu chain C region, found in Mesocricetus auratus (Golden hamster).